A 380-amino-acid polypeptide reads, in one-letter code: PqqA peptide cyclase (380 aa).

Residues 8–223 enclose the Radical SAM core domain; that stretch reads VNPPLWLLAE…VADYRQKMAA (216 aa). Residues Cys22, Cys26, and Cys29 each contribute to the [4Fe-4S] cluster site.

Belongs to the radical SAM superfamily. PqqE family. As to quaternary structure, interacts with PqqD. The interaction is necessary for activity of PqqE. Requires [4Fe-4S] cluster as cofactor.

The catalysed reaction is [PQQ precursor protein] + S-adenosyl-L-methionine = E-Y cross-linked-[PQQ precursor protein] + 5'-deoxyadenosine + L-methionine + H(+). The protein operates within cofactor biosynthesis; pyrroloquinoline quinone biosynthesis. Functionally, catalyzes the cross-linking of a glutamate residue and a tyrosine residue in the PqqA protein as part of the biosynthesis of pyrroloquinoline quinone (PQQ). In Klebsiella pneumoniae (strain 342), this protein is PqqA peptide cyclase.